Consider the following 87-residue polypeptide: UPF0335 protein RL4065 (87 aa).

Belongs to the UPF0335 family.

In Rhizobium johnstonii (strain DSM 114642 / LMG 32736 / 3841) (Rhizobium leguminosarum bv. viciae), this protein is UPF0335 protein RL4065.